A 424-amino-acid chain; its full sequence is Imidazolonepropionase (424 aa).

Residues H85 and H87 each coordinate Fe(3+). The Zn(2+) site is built by H85 and H87. 4-imidazolone-5-propanoate-binding residues include R94, Y157, and H190. N-formimidoyl-L-glutamate is bound at residue Y157. H255 contributes to the Fe(3+) binding site. H255 contacts Zn(2+). E258 serves as a coordination point for 4-imidazolone-5-propanoate. D329 is a binding site for Fe(3+). Position 329 (D329) interacts with Zn(2+). 2 residues coordinate N-formimidoyl-L-glutamate: N331 and G333. S334 contacts 4-imidazolone-5-propanoate.

It belongs to the metallo-dependent hydrolases superfamily. HutI family. Zn(2+) is required as a cofactor. Requires Fe(3+) as cofactor.

Its subcellular location is the cytoplasm. It catalyses the reaction 4-imidazolone-5-propanoate + H2O = N-formimidoyl-L-glutamate. It functions in the pathway amino-acid degradation; L-histidine degradation into L-glutamate; N-formimidoyl-L-glutamate from L-histidine: step 3/3. In terms of biological role, catalyzes the hydrolytic cleavage of the carbon-nitrogen bond in imidazolone-5-propanoate to yield N-formimidoyl-L-glutamate. It is the third step in the universal histidine degradation pathway. The polypeptide is Imidazolonepropionase (Brevibacillus brevis (strain 47 / JCM 6285 / NBRC 100599)).